We begin with the raw amino-acid sequence, 208 residues long: Hypoxanthine-guanine phosphoribosyltransferase (208 aa).

GMP-binding positions include lysine 63, 122–130 (EDIVDSAIT), lysine 154, and aspartate 182. The Proton acceptor role is filled by aspartate 126. Position 182 (aspartate 182) interacts with Mg(2+).

This sequence belongs to the purine/pyrimidine phosphoribosyltransferase family. Mg(2+) is required as a cofactor.

The protein localises to the cytoplasm. The enzyme catalyses IMP + diphosphate = hypoxanthine + 5-phospho-alpha-D-ribose 1-diphosphate. It carries out the reaction GMP + diphosphate = guanine + 5-phospho-alpha-D-ribose 1-diphosphate. It functions in the pathway purine metabolism; IMP biosynthesis via salvage pathway; IMP from hypoxanthine: step 1/1. Converts guanine to guanosine monophosphate, and hypoxanthine to inosine monophosphate. Transfers the 5-phosphoribosyl group from 5-phosphoribosylpyrophosphate onto the purine. Plays a central role in the generation of purine nucleotides through the purine salvage pathway. This Crithidia fasciculata protein is Hypoxanthine-guanine phosphoribosyltransferase (HGPRT).